We begin with the raw amino-acid sequence, 178 residues long: Colicin-A immunity protein (178 aa).

Residues 1–13 (MMNEHSIDTDNRK) are Cytoplasmic-facing. A helical membrane pass occupies residues 14-37 (ANNALYLFIIIGLIPLLCIFVVYY). Topologically, residues 38–68 (KTPDALLLRKIATSTENLPSITSSYNPLMTK) are periplasmic. Residues 69 to 89 (VMDIYCKTAPFLALILYILTF) form a helical membrane-spanning segment. Residues 90–105 (KIRKLINNTDRNTVLR) are Cytoplasmic-facing. Residues 106 to 123 (SCLLSPLVYAAIVYLFCF) form a helical membrane-spanning segment. The Periplasmic segment spans residues 124 to 142 (RNFELTTAGRPVRLMATND). Residues 143–165 (ATLLLFYIGLYSIIFFTTYITLF) traverse the membrane as a helical segment. The Cytoplasmic portion of the chain corresponds to 166-178 (TPVTAFKLLKKRQ).

It localises to the cell inner membrane. Its function is as follows. This protein is able to protect a cell, which harbors the plasmid ColA encoding colicin A, against colicin A. The protein is Colicin-A immunity protein (cai) of Citrobacter freundii.